The primary structure comprises 277 residues: 2-dehydro-3-deoxyphosphooctonate aldolase (277 aa).

It belongs to the KdsA family.

The protein localises to the cytoplasm. It catalyses the reaction D-arabinose 5-phosphate + phosphoenolpyruvate + H2O = 3-deoxy-alpha-D-manno-2-octulosonate-8-phosphate + phosphate. Its pathway is carbohydrate biosynthesis; 3-deoxy-D-manno-octulosonate biosynthesis; 3-deoxy-D-manno-octulosonate from D-ribulose 5-phosphate: step 2/3. It participates in bacterial outer membrane biogenesis; lipopolysaccharide biosynthesis. In Alkalilimnicola ehrlichii (strain ATCC BAA-1101 / DSM 17681 / MLHE-1), this protein is 2-dehydro-3-deoxyphosphooctonate aldolase.